The chain runs to 285 residues: Putative sugar uptake protein lin0444 (285 aa).

The next 9 membrane-spanning stretches (helical) occupy residues 2-21 (SIYLIALLPVLGWGFMPIIA), 31-50 (QLLGTSISALLFAFILFWIL), 55-77 (TVLSFIVSFVSGIFWSFGQLLQF), 111-133 (WQTVTAVIIGVVAVILILIGVVM), 146-168 (SVSFHVYGIVILSSFFLTLYVVT), 172-194 (FDVTGFSIILPQAIGMLTCAIGI), 207-229 (VTFNLMTGLSWSIANLGMFLATA), 233-255 (VATSFSISQACVIVATIGGILIF), and 262-284 (LEWTFILSGILLIMVGVVFLSLL).

Belongs to the GRP transporter (TC 2.A.7.5) family.

The protein localises to the cell membrane. The chain is Putative sugar uptake protein lin0444 from Listeria innocua serovar 6a (strain ATCC BAA-680 / CLIP 11262).